Here is a 545-residue protein sequence, read N- to C-terminus: Hydroxylamine reductase (545 aa).

[4Fe-4S] cluster contacts are provided by cysteine 3, cysteine 6, cysteine 15, and cysteine 21. Histidine 240, glutamate 264, cysteine 309, cysteine 401, cysteine 429, cysteine 454, glutamate 488, and lysine 490 together coordinate hybrid [4Fe-2O-2S] cluster. At cysteine 401 the chain carries Cysteine persulfide.

The protein belongs to the HCP family. It depends on [4Fe-4S] cluster as a cofactor. The cofactor is hybrid [4Fe-2O-2S] cluster.

It localises to the cytoplasm. It catalyses the reaction A + NH4(+) + H2O = hydroxylamine + AH2 + H(+). In terms of biological role, catalyzes the reduction of hydroxylamine to form NH(3) and H(2)O. This Rippkaea orientalis (strain PCC 8801 / RF-1) (Cyanothece sp. (strain PCC 8801)) protein is Hydroxylamine reductase.